A 453-amino-acid chain; its full sequence is Kynureninase (453 aa).

Pyridoxal 5'-phosphate-binding positions include leucine 114, threonine 115, 142 to 145 (FPSD), aspartate 232, histidine 235, and tyrosine 257. Position 258 is an N6-(pyridoxal phosphate)lysine (lysine 258). Tryptophan 286 is a binding site for pyridoxal 5'-phosphate.

The protein belongs to the kynureninase family. As to quaternary structure, homodimer. Pyridoxal 5'-phosphate is required as a cofactor.

It is found in the cytoplasm. It catalyses the reaction L-kynurenine + H2O = anthranilate + L-alanine + H(+). It carries out the reaction 3-hydroxy-L-kynurenine + H2O = 3-hydroxyanthranilate + L-alanine + H(+). Its pathway is amino-acid degradation; L-kynurenine degradation; L-alanine and anthranilate from L-kynurenine: step 1/1. It participates in cofactor biosynthesis; NAD(+) biosynthesis; quinolinate from L-kynurenine: step 2/3. Its function is as follows. Catalyzes the cleavage of L-kynurenine (L-Kyn) and L-3-hydroxykynurenine (L-3OHKyn) into anthranilic acid (AA) and 3-hydroxyanthranilic acid (3-OHAA), respectively. This Cryptococcus neoformans var. neoformans serotype D (strain JEC21 / ATCC MYA-565) (Filobasidiella neoformans) protein is Kynureninase.